The sequence spans 238 residues: Aspartate/glutamate leucyltransferase (238 aa).

The protein belongs to the R-transferase family. Bpt subfamily.

It localises to the cytoplasm. The enzyme catalyses N-terminal L-glutamyl-[protein] + L-leucyl-tRNA(Leu) = N-terminal L-leucyl-L-glutamyl-[protein] + tRNA(Leu) + H(+). It catalyses the reaction N-terminal L-aspartyl-[protein] + L-leucyl-tRNA(Leu) = N-terminal L-leucyl-L-aspartyl-[protein] + tRNA(Leu) + H(+). Functionally, functions in the N-end rule pathway of protein degradation where it conjugates Leu from its aminoacyl-tRNA to the N-termini of proteins containing an N-terminal aspartate or glutamate. This chain is Aspartate/glutamate leucyltransferase, found in Shewanella oneidensis (strain ATCC 700550 / JCM 31522 / CIP 106686 / LMG 19005 / NCIMB 14063 / MR-1).